The sequence spans 240 residues: Uridylate kinase (240 aa).

9-12 is an ATP binding site; sequence KLSG. Position 51 (G51) interacts with UMP. Positions 52 and 56 each coordinate ATP. UMP contacts are provided by residues D71 and 132–139; that span reads TGNPFFTT. 3 residues coordinate ATP: T159, Y165, and D168.

This sequence belongs to the UMP kinase family. As to quaternary structure, homohexamer.

The protein localises to the cytoplasm. It catalyses the reaction UMP + ATP = UDP + ADP. Its pathway is pyrimidine metabolism; CTP biosynthesis via de novo pathway; UDP from UMP (UMPK route): step 1/1. Its activity is regulated as follows. Inhibited by UTP. In terms of biological role, catalyzes the reversible phosphorylation of UMP to UDP. The chain is Uridylate kinase from Synechococcus elongatus (strain ATCC 33912 / PCC 7942 / FACHB-805) (Anacystis nidulans R2).